We begin with the raw amino-acid sequence, 63 residues long: Anionic peptide 10.1 (63 aa).

The N-terminal stretch at 1–20 (MISRFCLLFLLVFVVSKIQA) is a signal peptide.

It belongs to the non-disulfide-bridged peptide (NDBP) superfamily. Long chain multifunctional peptide (group 2) family. As to expression, expressed by the venom gland.

The protein resides in the secreted. The protein is Anionic peptide 10.1 of Lychas mucronatus (Chinese swimming scorpion).